The sequence spans 293 residues: tRNA (guanine(9)-N1)-methyltransferase (293 aa).

The tract at residues 1–31 (MSNDEINQNEEKVKRTPPLPPVPEGMSKKQW) is disordered. At Thr16 the chain carries Phosphothreonine. Residues 32-61 (KKMCKRQRWEENKAKYNAERRVKKKRLRHE) are a coiled coil. Residues 83 to 279 (EPRINVNQTD…SVLPPRKLDA (197 aa)) form the SAM-dependent MTase TRM10-type domain. Residues 186–187 (LT), Gly206, 210–214 (DKNRY), Cys218, Leu232, and 244–246 (RVL) each bind S-adenosyl-L-methionine. Residue Asp210 is the Proton acceptor of the active site. Phosphoserine is present on Ser283.

Belongs to the class IV-like SAM-binding methyltransferase superfamily. TRM10 family. Monomer.

Its subcellular location is the cytoplasm. It is found in the nucleus. The enzyme catalyses guanosine(9) in tRNA + S-adenosyl-L-methionine = N(1)-methylguanosine(9) in tRNA + S-adenosyl-L-homocysteine + H(+). Its function is as follows. S-adenosyl-L-methionine-dependent guanine N(1)-methyltransferase that catalyzes the formation of N(1)-methylguanine at position 9 (m1G9) in cytoplasmic tRNAs. The sequence is that of tRNA (guanine(9)-N1)-methyltransferase from Saccharomyces cerevisiae (strain ATCC 204508 / S288c) (Baker's yeast).